The sequence spans 160 residues: 2-C-methyl-D-erythritol 2,4-cyclodiphosphate synthase (160 aa).

A divalent metal cation is bound by residues Asp-9 and His-11. 4-CDP-2-C-methyl-D-erythritol 2-phosphate-binding positions include 9–11 (DVH) and 35–36 (HS). His-43 contributes to the a divalent metal cation binding site. 4-CDP-2-C-methyl-D-erythritol 2-phosphate-binding positions include 57-59 (DIG), 62-66 (FPDTD), 101-107 (AEAPKMA), 133-136 (TTSE), Phe-140, and Arg-143.

It belongs to the IspF family. In terms of assembly, homotrimer. A divalent metal cation serves as cofactor.

It catalyses the reaction 4-CDP-2-C-methyl-D-erythritol 2-phosphate = 2-C-methyl-D-erythritol 2,4-cyclic diphosphate + CMP. It functions in the pathway isoprenoid biosynthesis; isopentenyl diphosphate biosynthesis via DXP pathway; isopentenyl diphosphate from 1-deoxy-D-xylulose 5-phosphate: step 4/6. In terms of biological role, involved in the biosynthesis of isopentenyl diphosphate (IPP) and dimethylallyl diphosphate (DMAPP), two major building blocks of isoprenoid compounds. Catalyzes the conversion of 4-diphosphocytidyl-2-C-methyl-D-erythritol 2-phosphate (CDP-ME2P) to 2-C-methyl-D-erythritol 2,4-cyclodiphosphate (ME-CPP) with a corresponding release of cytidine 5-monophosphate (CMP). The chain is 2-C-methyl-D-erythritol 2,4-cyclodiphosphate synthase from Methylobacillus flagellatus (strain ATCC 51484 / DSM 6875 / VKM B-1610 / KT).